We begin with the raw amino-acid sequence, 212 residues long: Ribonuclease HII (212 aa).

An RNase H type-2 domain is found at 28-212; it reads SIIAGVDEVG…KSFAPIRQVV (185 aa). A divalent metal cation-binding residues include Asp-34, Glu-35, and Asp-127.

The protein belongs to the RNase HII family. Mn(2+) serves as cofactor. Requires Mg(2+) as cofactor.

Its subcellular location is the cytoplasm. The catalysed reaction is Endonucleolytic cleavage to 5'-phosphomonoester.. Endonuclease that specifically degrades the RNA of RNA-DNA hybrids. This is Ribonuclease HII from Chlamydia caviae (strain ATCC VR-813 / DSM 19441 / 03DC25 / GPIC) (Chlamydophila caviae).